A 98-amino-acid chain; its full sequence is Large ribosomal subunit protein uL23 (98 aa).

It belongs to the universal ribosomal protein uL23 family. Part of the 50S ribosomal subunit. Contacts protein L29, and trigger factor when it is bound to the ribosome.

Functionally, one of the early assembly proteins it binds 23S rRNA. One of the proteins that surrounds the polypeptide exit tunnel on the outside of the ribosome. Forms the main docking site for trigger factor binding to the ribosome. This is Large ribosomal subunit protein uL23 from Rickettsia bellii (strain OSU 85-389).